Here is a 129-residue protein sequence, read N- to C-terminus: UPF0344 protein SAR0931 (129 aa).

Transmembrane regions (helical) follow at residues 1-21 (MLHL…ATYL), 36-56 (LHMV…WILI), 67-87 (MLLT…EVSI), and 99-119 (MFWI…ILPL).

This sequence belongs to the UPF0344 family.

The protein localises to the cell membrane. The protein is UPF0344 protein SAR0931 of Staphylococcus aureus (strain MRSA252).